The sequence spans 58 residues: Ranakinin-N (58 aa).

An N-terminal signal peptide occupies residues 1-22 (MFTMKKSLLLLFFLGTISMSLC). Positions 23-43 (EEKRDADEEETEGEAKMEDIK) are excised as a propeptide. Positions 25-58 (KRDADEEETEGEAKMEDIKRAEAVPPGFTPFRKP) are disordered. A compositionally biased stretch (basic and acidic residues) spans 35 to 46 (GEAKMEDIKRAE).

Expressed by the skin glands.

Its subcellular location is the secreted. In terms of biological role, induces contraction of intestinal smooth muscle in isolated guinea pig ileum. May induce relaxation of arterial smooth muscle. May target bradykinin receptors (BDKRB). Lacks antibacterial activity against the Gram-positive bacterium S.aureus and the Gram-negative bacteria E.coli and B.dysenteria, and antifungal activity against C.albicans. This is Ranakinin-N from Hylarana nigrovittata (Black-striped frog).